Reading from the N-terminus, the 199-residue chain is Recombination protein RecR (199 aa).

The C4-type zinc finger occupies 56–71 (CRSCFNVAQSELCRIC). Positions 79–174 (ALICVVEEPK…RVTRLASGLP (96 aa)) constitute a Toprim domain.

The protein belongs to the RecR family.

May play a role in DNA repair. It seems to be involved in an RecBC-independent recombinational process of DNA repair. It may act with RecF and RecO. The sequence is that of Recombination protein RecR from Frankia alni (strain DSM 45986 / CECT 9034 / ACN14a).